Consider the following 516-residue polypeptide: 3-phosphoshikimate 1-carboxyvinyltransferase, chloroplastic (516 aa).

The N-terminal 72 residues, 1–72 (MAQSSRICHG…KVTASVSTSE (72 aa)), are a transit peptide targeting the chloroplast. 3 residues coordinate 3-phosphoshikimate: Lys-95, Ser-96, and Arg-100. Lys-95 is a binding site for phosphoenolpyruvate. The phosphoenolpyruvate site is built by Gly-173 and Arg-203. 3-phosphoshikimate is bound by residues Ser-250, Ser-251, Gln-252, Ser-278, Asp-403, and Lys-430. Residue Gln-252 participates in phosphoenolpyruvate binding. The active-site Proton acceptor is Asp-403. The phosphoenolpyruvate site is built by Arg-434, Arg-476, and Lys-501.

Belongs to the EPSP synthase family.

Its subcellular location is the plastid. It is found in the chloroplast. It carries out the reaction 3-phosphoshikimate + phosphoenolpyruvate = 5-O-(1-carboxyvinyl)-3-phosphoshikimate + phosphate. The protein operates within metabolic intermediate biosynthesis; chorismate biosynthesis; chorismate from D-erythrose 4-phosphate and phosphoenolpyruvate: step 6/7. Catalyzes the transfer of the enolpyruvyl moiety of phosphoenolpyruvate (PEP) to the 5-hydroxyl of shikimate-3-phosphate (S3P) to produce enolpyruvyl shikimate-3-phosphate and inorganic phosphate. The chain is 3-phosphoshikimate 1-carboxyvinyltransferase, chloroplastic from Brassica napus (Rape).